We begin with the raw amino-acid sequence, 1035 residues long: Beta-galactosidase (1035 aa).

Substrate contacts are provided by asparagine 109 and aspartate 208. Aspartate 208 is a Na(+) binding site. Mg(2+) contacts are provided by glutamate 424, histidine 426, and glutamate 469. Substrate contacts are provided by residues glutamate 469 and 545 to 548 (EYAH). Glutamate 469 serves as the catalytic Proton donor. The Nucleophile role is filled by glutamate 545. A Mg(2+)-binding site is contributed by asparagine 605. Na(+)-binding residues include phenylalanine 609 and asparagine 612. Substrate is bound by residues asparagine 612 and tryptophan 1011.

This sequence belongs to the glycosyl hydrolase 2 family. In terms of assembly, homotetramer. It depends on Mg(2+) as a cofactor. Requires Na(+) as cofactor.

It carries out the reaction Hydrolysis of terminal non-reducing beta-D-galactose residues in beta-D-galactosides.. This chain is Beta-galactosidase, found in Klebsiella pneumoniae (strain 342).